A 314-amino-acid polypeptide reads, in one-letter code: Acetyl-coenzyme A carboxylase carboxyl transferase subunit alpha (314 aa).

The 258-residue stretch at 32–289 (EIDMLEASLA…KRTFESHLSE (258 aa)) folds into the CoA carboxyltransferase C-terminal domain.

It belongs to the AccA family. Acetyl-CoA carboxylase is a heterohexamer composed of biotin carboxyl carrier protein (AccB), biotin carboxylase (AccC) and two subunits each of ACCase subunit alpha (AccA) and ACCase subunit beta (AccD).

It localises to the cytoplasm. It carries out the reaction N(6)-carboxybiotinyl-L-lysyl-[protein] + acetyl-CoA = N(6)-biotinyl-L-lysyl-[protein] + malonyl-CoA. The protein operates within lipid metabolism; malonyl-CoA biosynthesis; malonyl-CoA from acetyl-CoA: step 1/1. Its function is as follows. Component of the acetyl coenzyme A carboxylase (ACC) complex. First, biotin carboxylase catalyzes the carboxylation of biotin on its carrier protein (BCCP) and then the CO(2) group is transferred by the carboxyltransferase to acetyl-CoA to form malonyl-CoA. The sequence is that of Acetyl-coenzyme A carboxylase carboxyl transferase subunit alpha from Staphylococcus saprophyticus subsp. saprophyticus (strain ATCC 15305 / DSM 20229 / NCIMB 8711 / NCTC 7292 / S-41).